The primary structure comprises 280 residues: 4-diphosphocytidyl-2-C-methyl-D-erythritol kinase (280 aa).

The active site involves K8. Position 91-101 (91-101 (PVAAGLAGGSA)) interacts with ATP. D133 is a catalytic residue.

It belongs to the GHMP kinase family. IspE subfamily.

It carries out the reaction 4-CDP-2-C-methyl-D-erythritol + ATP = 4-CDP-2-C-methyl-D-erythritol 2-phosphate + ADP + H(+). It functions in the pathway isoprenoid biosynthesis; isopentenyl diphosphate biosynthesis via DXP pathway; isopentenyl diphosphate from 1-deoxy-D-xylulose 5-phosphate: step 3/6. Its function is as follows. Catalyzes the phosphorylation of the position 2 hydroxy group of 4-diphosphocytidyl-2C-methyl-D-erythritol. This Clostridium acetobutylicum (strain ATCC 824 / DSM 792 / JCM 1419 / IAM 19013 / LMG 5710 / NBRC 13948 / NRRL B-527 / VKM B-1787 / 2291 / W) protein is 4-diphosphocytidyl-2-C-methyl-D-erythritol kinase.